The chain runs to 129 residues: Fluoride-specific ion channel FluC 2 (129 aa).

4 helical membrane passes run 3 to 23 (FLYVGIFGALGGMCRYAMNLW), 32 to 52 (ATLAVNLIGCFLLAFIMPFLA), 59 to 79 (LVLLNGIGTGFIGAFTTFSAF), and 90 to 110 (GEVVLAISYILVSLIGGLVMV). Positions 71 and 74 each coordinate Na(+).

Belongs to the fluoride channel Fluc/FEX (TC 1.A.43) family.

It is found in the cell membrane. The enzyme catalyses fluoride(in) = fluoride(out). With respect to regulation, na(+) is not transported, but it plays an essential structural role and its presence is essential for fluoride channel function. Functionally, fluoride-specific ion channel. Important for reducing fluoride concentration in the cell, thus reducing its toxicity. In Listeria innocua serovar 6a (strain ATCC BAA-680 / CLIP 11262), this protein is Fluoride-specific ion channel FluC 2.